Here is a 179-residue protein sequence, read N- to C-terminus: MPSWKELVLVKGHPMQRIYIEKVVVNIGVGASGEKLEKAAGLLKELTGAEPSRRRAKKSIKDFGIRKGEPIGVAVTLRRDQAVNFLMRALQAVNNRVKKTSFDDRGNVCFGIKEHILLPGVKYDPAVGIWGMDVCVKLAKPGLRVQLRRRRRSKVGKRQLVTKEEAIEFFQKVLGVQVD.

Belongs to the universal ribosomal protein uL5 family. As to quaternary structure, part of the 50S ribosomal subunit; contacts the 5S rRNA and probably tRNA. Forms a bridge to the 30S subunit in the 70S ribosome.

In terms of biological role, this is one of the proteins that bind and probably mediate the attachment of the 5S RNA into the large ribosomal subunit, where it forms part of the central protuberance. In the 70S ribosome it contacts protein S13 of the 30S subunit (bridge B1b), connecting the 2 subunits; this bridge is implicated in subunit movement. May contact the P site tRNA; the 5S rRNA and some of its associated proteins might help stabilize positioning of ribosome-bound tRNAs. The polypeptide is Large ribosomal subunit protein uL5 (Pyrobaculum aerophilum (strain ATCC 51768 / DSM 7523 / JCM 9630 / CIP 104966 / NBRC 100827 / IM2)).